Consider the following 150-residue polypeptide: Putative TBC1 domain family member 29 (150 aa).

The Rab-GAP TBC; truncated domain occupies 1 to 43; sequence MGHLDKEGLCTQGSSFSWLLRVLNDGISLGLTPCLWDMYLLEG. The segment covering 102–111 has biased composition (polar residues); it reads ESSRGPSLLQ. A disordered region spans residues 102–125; the sequence is ESSRGPSLLQTPPRVPGQQALSRG.

This Homo sapiens (Human) protein is Putative TBC1 domain family member 29.